Reading from the N-terminus, the 473-residue chain is Beta-secretase 1 (473 aa).

A signal peptide spans 1–21; sequence MAPALPWLLLWVGSGVLPVHG. Positions 22 to 45 are excised as a propeptide; sequence TQDGIRLPLRSGLAGAPLGLRLPR. Topologically, residues 22-429 are extracellular; that stretch reads TQDGIRLPLR…PQTDESTLMT (408 aa). Positions 72–388 constitute a Peptidase A1 domain; sequence YYVEMTVGSP…DRARKRIGFA (317 aa). The active site involves aspartate 90. Lysine 123 bears the N6-acetyllysine mark. N-linked (GlcNAc...) asparagine glycans are attached at residues asparagine 150, asparagine 169, and asparagine 195. 3 disulfides stabilise this stretch: cysteine 188/cysteine 392, cysteine 250/cysteine 415, and cysteine 302/cysteine 352. 3 positions are modified to N6-acetyllysine: lysine 247, lysine 251, and lysine 257. Aspartate 261 is a catalytic residue. Residues lysine 271, lysine 272, and lysine 279 each carry the N6-acetyllysine modification. A glycan (N-linked (GlcNAc...) asparagine) is linked at asparagine 326. The chain crosses the membrane as a helical span at residues 430–450; it reads IAYVMAAICALFMLPLCLMVC. 4 S-palmitoyl cysteine lipidation sites follow: cysteine 446, cysteine 450, cysteine 454, and cysteine 457. The Cytoplasmic portion of the chain corresponds to 451–473; it reads QWRCLRCLRHQHDDFADDISLLK. Positions 451 to 473 are interaction with RTN3; sequence QWRCLRCLRHQHDDFADDISLLK. The short motif at 468–472 is the DXXLL element; that stretch reads DISLL. Serine 470 carries the phosphoserine modification. A Glycyl lysine isopeptide (Lys-Gly) (interchain with G-Cter in ubiquitin) cross-link involves residue lysine 473.

Belongs to the peptidase A1 family. In terms of assembly, monomer. Interacts (via DXXLL motif) with GGA1, GGA2 and GGA3 (via their VHS domain); the interaction highly increases when BACE1 is phosphorylated at Ser-470. Interacts with RTN1; RTN2; RTN3 and RTN4; the interaction leads to inhibition of amyloid precursor protein processing. Interacts with SNX6. Interacts with PCSK9. Interacts with NAT8 and NAT8B. Interacts with BIN1. Interacts (via extracellular domain) with ADAM10 (via extracellular domain). Interacts with SORL1; this interaction may affect binding with APP and hence reduce APP cleavage. Interacts with NRDC AND NRG1. Post-translationally, palmitoylation mediates lipid raft localization. Acetylated in the endoplasmic reticulum at Lys-123, Lys-247, Lys-251, Lys-257, Lys-271, Lys-272, and Lys-279. Acetylation by NAT8 and NAT8B is transient and deacetylation probably occurs in the Golgi. Acetylation regulates the maturation, the transport to the plasma membrane, the stability and the expression of the protein. In terms of processing, ubiquitinated at Lys-473, ubiquitination leads to lysosomal degradation. Monoubiquitinated and 'Lys-63'-linked polyubitinated. Deubiquitnated by USP8; inhibits lysosomal degradation. Post-translationally, phosphorylation at Ser-470 is required for interaction with GGA1 and retrograded transport from endosomal compartments to the trans-Golgi network. Non-phosphorylated BACE1 enters a direct recycling route to the cell surface. N-Glycosylated. Addition of a bisecting N-acetylglucosamine by MGAT3 blocks lysosomal targeting, further degradation and is required for maintaining stability under stress conditions.

The protein localises to the cell membrane. The protein resides in the golgi apparatus. It localises to the trans-Golgi network. It is found in the endoplasmic reticulum. Its subcellular location is the endosome. The protein localises to the cell surface. The protein resides in the cytoplasmic vesicle membrane. It localises to the membrane raft. It is found in the lysosome. Its subcellular location is the late endosome. The protein localises to the early endosome. The protein resides in the recycling endosome. It localises to the cell projection. It is found in the axon. Its subcellular location is the dendrite. It carries out the reaction Broad endopeptidase specificity. Cleaves Glu-Val-Asn-Leu-|-Asp-Ala-Glu-Phe in the Swedish variant of Alzheimer's amyloid precursor protein.. Its activity is regulated as follows. Inhibited by RTN3 and RTN4. Its function is as follows. Responsible for the proteolytic processing of the amyloid precursor protein (APP). Cleaves at the N-terminus of the A-beta peptide sequence, between residues 671 and 672 of APP, leads to the generation and extracellular release of beta-cleaved soluble APP, and a corresponding cell-associated C-terminal fragment which is later released by gamma-secretase. Cleaves CHL1. The protein is Beta-secretase 1 (BACE1) of Cavia porcellus (Guinea pig).